Here is a 402-residue protein sequence, read N- to C-terminus: Formate-dependent phosphoribosylglycinamide formyltransferase (402 aa).

N(1)-(5-phospho-beta-D-ribosyl)glycinamide contacts are provided by residues 22-23 (EL) and Glu-82. ATP-binding positions include Arg-115, Lys-160, 165–170 (SSGKGQ), 200–203 (EGFV), and Glu-208. One can recognise an ATP-grasp domain in the interval 120 to 318 (RLAAETLGLP…EFELHARAIL (199 aa)). Mg(2+) is bound by residues Glu-277 and Glu-289. Residues Asp-296, Lys-365, and 372 to 373 (RR) contribute to the N(1)-(5-phospho-beta-D-ribosyl)glycinamide site.

It belongs to the PurK/PurT family. As to quaternary structure, homodimer.

It carries out the reaction N(1)-(5-phospho-beta-D-ribosyl)glycinamide + formate + ATP = N(2)-formyl-N(1)-(5-phospho-beta-D-ribosyl)glycinamide + ADP + phosphate + H(+). Its pathway is purine metabolism; IMP biosynthesis via de novo pathway; N(2)-formyl-N(1)-(5-phospho-D-ribosyl)glycinamide from N(1)-(5-phospho-D-ribosyl)glycinamide (formate route): step 1/1. Its function is as follows. Involved in the de novo purine biosynthesis. Catalyzes the transfer of formate to 5-phospho-ribosyl-glycinamide (GAR), producing 5-phospho-ribosyl-N-formylglycinamide (FGAR). Formate is provided by PurU via hydrolysis of 10-formyl-tetrahydrofolate. This is Formate-dependent phosphoribosylglycinamide formyltransferase from Mycobacteroides abscessus (strain ATCC 19977 / DSM 44196 / CCUG 20993 / CIP 104536 / JCM 13569 / NCTC 13031 / TMC 1543 / L948) (Mycobacterium abscessus).